The sequence spans 121 residues: Apoptin (121 aa).

2 disordered regions span residues 1-28 and 57-95; these read MNAH…LETP and LRSA…PSEY. Polar residues predominate over residues 58-70; it reads RSATADNSENTGF.

It belongs to the gyrovirus apoptin family.

It localises to the host nucleus. May act as transcriptional regulator. Induces apoptosis in infected cells. Element of infectious replication cycle. This Gallus gallus (Chicken) protein is Apoptin (VP3).